The sequence spans 290 residues: ATP synthase gamma chain (290 aa).

This sequence belongs to the ATPase gamma chain family. As to quaternary structure, F-type ATPases have 2 components, CF(1) - the catalytic core - and CF(0) - the membrane proton channel. CF(1) has five subunits: alpha(3), beta(3), gamma(1), delta(1), epsilon(1). CF(0) has three main subunits: a, b and c.

The protein localises to the cell inner membrane. Its function is as follows. Produces ATP from ADP in the presence of a proton gradient across the membrane. The gamma chain is believed to be important in regulating ATPase activity and the flow of protons through the CF(0) complex. This is ATP synthase gamma chain from Thiobacillus denitrificans (strain ATCC 25259 / T1).